A 62-amino-acid chain; its full sequence is Large ribosomal subunit protein eL37 (62 aa).

4 residues coordinate Zn(2+): C20, C23, C35, and C38. The C4-type zinc-finger motif lies at 20-38 (CRRCGRHSFNVAKGYCAAC).

Belongs to the eukaryotic ribosomal protein eL37 family. Zn(2+) serves as cofactor.

Its function is as follows. Binds to the 23S rRNA. This is Large ribosomal subunit protein eL37 from Desulfurococcus amylolyticus (strain DSM 18924 / JCM 16383 / VKM B-2413 / 1221n) (Desulfurococcus kamchatkensis).